The following is a 345-amino-acid chain: Trace amine-associated receptor 6 (345 aa).

Residues 1 to 32 are Extracellular-facing; that stretch reads MSSNSSLLVAVQLCYPNVNGSCVETLYSPGSR. Asn-4 and Asn-19 each carry an N-linked (GlcNAc...) asparagine glycan. Cystine bridges form between Cys-22/Cys-186 and Cys-105/Cys-190. The helical transmembrane segment at 33–53 threads the bilayer; it reads VILYIVFGFGAVLAVFGNLLV. Residues 54–68 lie on the Cytoplasmic side of the membrane; it reads MISILHFKQLHSPTN. A helical transmembrane segment spans residues 69–89; the sequence is FLVASLACADFLVGVTVMPFS. At 90–107 the chain is on the extracellular side; it reads MVRTVESCWYFGRSFCTF. A helical transmembrane segment spans residues 108–128; the sequence is HTCCDVAFCYSSLFHLCFISI. At 129 to 147 the chain is on the cytoplasmic side; that stretch reads DRYIAVTDPLVYPTKFTVS. A helical membrane pass occupies residues 148–168; sequence VSGICISVSWILPLMYSGAVF. At 169–202 the chain is on the extracellular side; the sequence is YTGVYDDGLEELSDALNCIGGCQTVVNQNWVLID. A helical transmembrane segment spans residues 203–223; the sequence is CLSFFIPTFIMIILYGNIFLV. Topologically, residues 224–259 are cytoplasmic; that stretch reads ARRQAKKIENTGSKTESSSESYKARVARRERKAAKT. A helical membrane pass occupies residues 260 to 276; that stretch reads LGVTVVAFMISWLPYSI. Topologically, residues 277-282 are extracellular; it reads DSLIDA. The chain crosses the membrane as a helical span at residues 283–302; sequence FMGFITPAYIYEICCWCAYY. At 303 to 345 the chain is on the cytoplasmic side; sequence NSAMNPLIYALFYPWFRKAIKVIVTGQVLKNSSATMNLFSEHI.

It belongs to the G-protein coupled receptor 1 family.

It localises to the cell membrane. Olfactory receptor specific for trace amines, such as beta-phenylethylamine (beta-PEA). Trace amine compounds are enriched in animal body fluids and act on trace amine-associated receptors (TAARs) to elicit both intraspecific and interspecific innate behaviors. Beta-PEA-binding causes a conformation change that triggers signaling via G(s)-class of G alpha proteins (GNAL or GNAS). In Pan troglodytes (Chimpanzee), this protein is Trace amine-associated receptor 6 (TAAR6).